A 554-amino-acid chain; its full sequence is 3-(3-hydroxy-phenyl)propionate/3-hydroxycinnamic acid hydroxylase (554 aa).

Residues glutamine 17–lysine 46 and phenylalanine 285–aspartate 295 each bind FAD.

Belongs to the PheA/TfdB FAD monooxygenase family. FAD serves as cofactor.

It carries out the reaction 3-(3-hydroxyphenyl)propanoate + NADH + O2 + H(+) = 3-(2,3-dihydroxyphenyl)propanoate + NAD(+) + H2O. The enzyme catalyses (2E)-3-(3-hydroxyphenyl)prop-2-enoate + NADH + O2 + H(+) = (2E)-3-(2,3-dihydroxyphenyl)prop-2-enoate + NAD(+) + H2O. The protein operates within aromatic compound metabolism; 3-phenylpropanoate degradation. Its function is as follows. Catalyzes the insertion of one atom of molecular oxygen into position 2 of the phenyl ring of 3-(3-hydroxyphenyl)propionate (3-HPP) and hydroxycinnamic acid (3HCI). This is 3-(3-hydroxy-phenyl)propionate/3-hydroxycinnamic acid hydroxylase from Escherichia coli O157:H7.